The primary structure comprises 152 residues: Probable flagellum biosynthesis repressor protein FlbT (152 aa).

Belongs to the FlbT family.

Its function is as follows. Has a post-transcriptional repressor function in flagellum biogenesis. Associates with the 5'-UTR of fljK mRNA and promotes its degradation. The sequence is that of Probable flagellum biosynthesis repressor protein FlbT from Brucella abortus (strain S19).